Reading from the N-terminus, the 316-residue chain is Methionyl-tRNA formyltransferase (316 aa).

A (6S)-5,6,7,8-tetrahydrofolate-binding site is contributed by 117–120; sequence SLLP.

It belongs to the Fmt family.

It catalyses the reaction L-methionyl-tRNA(fMet) + (6R)-10-formyltetrahydrofolate = N-formyl-L-methionyl-tRNA(fMet) + (6S)-5,6,7,8-tetrahydrofolate + H(+). Functionally, attaches a formyl group to the free amino group of methionyl-tRNA(fMet). The formyl group appears to play a dual role in the initiator identity of N-formylmethionyl-tRNA by promoting its recognition by IF2 and preventing the misappropriation of this tRNA by the elongation apparatus. This is Methionyl-tRNA formyltransferase from Janthinobacterium sp. (strain Marseille) (Minibacterium massiliensis).